Consider the following 213-residue polypeptide: UPF0329 protein ECU04_0110 (213 aa).

Belongs to the UPF0329 family.

The sequence is that of UPF0329 protein ECU04_0110 from Encephalitozoon cuniculi (strain GB-M1) (Microsporidian parasite).